The chain runs to 288 residues: 4-diphosphocytidyl-2-C-methyl-D-erythritol kinase (288 aa).

Lys11 is an active-site residue. 95–105 (PVAAGMAGGSS) contributes to the ATP binding site. Asp137 is an active-site residue.

The protein belongs to the GHMP kinase family. IspE subfamily.

It carries out the reaction 4-CDP-2-C-methyl-D-erythritol + ATP = 4-CDP-2-C-methyl-D-erythritol 2-phosphate + ADP + H(+). The protein operates within isoprenoid biosynthesis; isopentenyl diphosphate biosynthesis via DXP pathway; isopentenyl diphosphate from 1-deoxy-D-xylulose 5-phosphate: step 3/6. Its function is as follows. Catalyzes the phosphorylation of the position 2 hydroxy group of 4-diphosphocytidyl-2C-methyl-D-erythritol. This chain is 4-diphosphocytidyl-2-C-methyl-D-erythritol kinase, found in Lachnospira eligens (strain ATCC 27750 / DSM 3376 / VPI C15-48 / C15-B4) (Eubacterium eligens).